The primary structure comprises 77 residues: Large ribosomal subunit protein bL28 (77 aa).

Residues 1-26 (MARVCKVTGKRPMSGNNVSHANNKTK) are disordered.

This sequence belongs to the bacterial ribosomal protein bL28 family.

In Neisseria gonorrhoeae (strain ATCC 700825 / FA 1090), this protein is Large ribosomal subunit protein bL28.